We begin with the raw amino-acid sequence, 147 residues long: Hemoglobin subunit beta (147 aa).

Val-2 bears the N-acetylvaline mark. Positions 3-147 constitute a Globin domain; it reads HLTGEEKAAV…VANALAHKYH (145 aa). The residue at position 13 (Thr-13) is a Phosphothreonine. Position 45 is a phosphoserine (Ser-45). Lys-60 is subject to N6-acetyllysine. His-64 provides a ligand contact to heme b. N6-acetyllysine is present on Lys-83. Heme b is bound at residue His-93. Residue Cys-94 is modified to S-nitrosocysteine. N6-acetyllysine is present on Lys-145.

Belongs to the globin family. In terms of assembly, heterotetramer of two alpha chains and two beta chains. In terms of tissue distribution, red blood cells.

Functionally, involved in oxygen transport from the lung to the various peripheral tissues. The protein is Hemoglobin subunit beta (HBB) of Ateles belzebuth (White-bellied spider monkey).